We begin with the raw amino-acid sequence, 36 residues long: Light-harvesting protein B-1015 gamma chain (36 aa).

Its function is as follows. One of the components of the bacteriochlorophyll-protein complex in the chromatophore membrane. This chain is Light-harvesting protein B-1015 gamma chain, found in Blastochloris viridis (Rhodopseudomonas viridis).